A 281-amino-acid chain; its full sequence is NAD kinase (281 aa).

D61 functions as the Proton acceptor in the catalytic mechanism. Residues 61–62 (DG), 134–135 (ND), R145, D164, 175–180 (TAYSLS), and Q234 contribute to the NAD(+) site.

Belongs to the NAD kinase family. The cofactor is a divalent metal cation.

The protein resides in the cytoplasm. It catalyses the reaction NAD(+) + ATP = ADP + NADP(+) + H(+). Involved in the regulation of the intracellular balance of NAD and NADP, and is a key enzyme in the biosynthesis of NADP. Catalyzes specifically the phosphorylation on 2'-hydroxyl of the adenosine moiety of NAD to yield NADP. The polypeptide is NAD kinase (Clostridium botulinum (strain 657 / Type Ba4)).